The sequence spans 497 residues: ADP-dependent glucokinase (497 aa).

The first 22 residues, Met-1–Leu-22, serve as a signal peptide directing secretion. The ADPK domain maps to Ser-52–Leu-497. Residues Glu-297, Glu-328, and Asp-481 each contribute to the Mg(2+) site. Residue Asp-481 is the Proton acceptor of the active site.

This sequence belongs to the ADP-dependent glucokinase family. Monomer. The cofactor is Mg(2+).

It is found in the secreted. The catalysed reaction is D-glucose + ADP = D-glucose 6-phosphate + AMP + H(+). The protein operates within carbohydrate degradation; glycolysis. Its function is as follows. Catalyzes the phosphorylation of D-glucose to D-glucose 6-phosphate using ADP as the phosphate donor. GDP and CDP can replace ADP, but with reduced efficiency. This Bos taurus (Bovine) protein is ADP-dependent glucokinase (ADPGK).